A 262-amino-acid chain; its full sequence is Thiamine thiazole synthase (262 aa).

NAD(+)-binding positions include Ser-40, 59–60 (ER), Gly-67, Val-133, and 159–161 (HID). Fe cation contacts are provided by Asp-161 and His-176. NAD(+) contacts are provided by Ser-179 and Met-226. Arg-236 contributes to the glycine binding site.

This sequence belongs to the THI4 family. Homooctamer; tetramer of dimers. Fe(2+) serves as cofactor.

It catalyses the reaction hydrogen sulfide + glycine + NAD(+) = ADP-5-ethyl-4-methylthiazole-2-carboxylate + nicotinamide + 3 H2O + H(+). It functions in the pathway cofactor biosynthesis; thiamine diphosphate biosynthesis. In terms of biological role, involved in the biosynthesis of the thiazole moiety of thiamine. Catalyzes the conversion of NAD and glycine to adenosine diphosphate 5-(2-hydroxyethyl)-4-methylthiazole-2-carboxylate (ADT), an adenylated thiazole intermediate, using free sulfide as a source of sulfur. In Methanococcus maripaludis (strain C7 / ATCC BAA-1331), this protein is Thiamine thiazole synthase.